A 711-amino-acid chain; its full sequence is Zinc finger CCCH domain-containing protein 32 (711 aa).

Over residues 1–21 (MEADGAAAAAAAGEASTEAGA) the composition is skewed to low complexity. The interval 1–23 (MEADGAAAAAAAGEASTEAGARP) is disordered. 3 consecutive C3H1-type zinc fingers follow at residues 31 to 60 (LRRN…HSDN), 62 to 88 (RMNP…HPPI), and 112 to 139 (GKQL…HGPQ). Disordered regions lie at residues 221–246 (KSEK…GDHP), 339–376 (RFNG…HSER), 405–561 (SSLA…EGPK), and 573–701 (AAWA…DDDD). Composition is skewed to basic and acidic residues over residues 364–376 (SERS…HSER) and 413–427 (RNGE…YRER). The span at 428 to 437 (AHGHRSHRDH) shows a compositional bias: basic residues. Composition is skewed to basic and acidic residues over residues 460-509 (SPDR…RRSS) and 585-594 (KQDKSAEVSH). Acidic residues-rich tracts occupy residues 648 to 663 (EDII…DADN) and 686 to 701 (ENAY…DDDD).

This Oryza sativa subsp. japonica (Rice) protein is Zinc finger CCCH domain-containing protein 32.